An 85-amino-acid chain; its full sequence is Small ribosomal subunit protein bS18c (85 aa).

This sequence belongs to the bacterial ribosomal protein bS18 family. In terms of assembly, part of the 30S ribosomal subunit.

It is found in the plastid. It localises to the chloroplast. The chain is Small ribosomal subunit protein bS18c from Zygnema circumcarinatum (Green alga).